We begin with the raw amino-acid sequence, 309 residues long: MGINFDVSRPKARSSINMTTKFHTIGLIGKPHHLGTNQTLKRLHHWLTMQGYEVLAEERVSTELGTNIEAVDLLEIGARCDLAIVVGGDGNMLGAARVLARFDLGVIGVNRGNLGFLTDLPPDAFEEALARVLDGEFDTEHRFLLEAEVYRHGMLKASNTAVNEAVLHPGKIAHMIEFEVYIDDQFMYSQRADGMIVSTPTGSTAYALSAGGAILTPNLQALILVPMFPHTLSCRPIVVDACSTIKMVVSPENGENLEVSCDGHVHLAVLPGDEIIIRRSSERLRLIHPKGHNYFHVLRTKLGWGSKLF.

The Proton acceptor role is filled by Asp-89. NAD(+)-binding positions include 89-90 (DG), 163-164 (NE), His-174, Arg-191, Asp-193, and 204-209 (TAYALS).

The protein belongs to the NAD kinase family. The cofactor is a divalent metal cation.

The protein resides in the cytoplasm. The catalysed reaction is NAD(+) + ATP = ADP + NADP(+) + H(+). Its function is as follows. Involved in the regulation of the intracellular balance of NAD and NADP, and is a key enzyme in the biosynthesis of NADP. Catalyzes specifically the phosphorylation on 2'-hydroxyl of the adenosine moiety of NAD to yield NADP. The polypeptide is NAD kinase (Shewanella sp. (strain W3-18-1)).